The chain runs to 295 residues: (R)-phenoxypropionate/alpha-ketoglutarate-dioxygenase (295 aa).

Residues His111 and Asp113 each coordinate Fe cation. The 2-oxoglutarate site is built by Thr138 and Trp255. His270 is a binding site for Fe cation. Arg281 serves as a coordination point for 2-oxoglutarate.

This sequence belongs to the TfdA dioxygenase family. In terms of assembly, homotrimer. Fe cation is required as a cofactor. L-ascorbate serves as cofactor.

It carries out the reaction (R)-2-(4-chloro-2-methylphenoxy)propanoate + 2-oxoglutarate + O2 = 2-methyl-4-chlorophenol + pyruvate + succinate + CO2. It catalyses the reaction (R)-(2,4-dichlorophenoxy)propanoate + 2-oxoglutarate + O2 = 2,4-dichlorophenol + pyruvate + succinate + CO2. The protein operates within xenobiotic degradation; 2-(2,4-dichlorophenoxy)propanoate degradation. With respect to regulation, inhibited by divalent cations, most significantly by copper and nickel, and by diethylpyrocarbonate (DEPC). Functionally, involved in the degradation of the phenoxypropionate herbicides. Catalyzes the enantiospecific cleavage of the ether bond in the herbicid R-dichlorprop ((R)-2-(2,4-dichlorophenoxy)propionate)(R-2,4-DP) and R-mecoprop ((R)-2-(4-chloro-2-methylphenoxy)propionate)(R-2,4-MCPP). It can also accept (RS)-2-(2,4,5-trichlorophenoxy)propionate, (RS)-2-(4-chlorophenoxy)propionate, (RS)-2-(m-chlorophenoxy)propionate, however it can only accept 2-oxoglutarate as oxygen acceptor. In Delftia acidovorans (Pseudomonas acidovorans), this protein is (R)-phenoxypropionate/alpha-ketoglutarate-dioxygenase.